A 264-amino-acid polypeptide reads, in one-letter code: GTP cyclohydrolase FolE2 (264 aa).

It belongs to the GTP cyclohydrolase IV family.

It carries out the reaction GTP + H2O = 7,8-dihydroneopterin 3'-triphosphate + formate + H(+). It functions in the pathway cofactor biosynthesis; 7,8-dihydroneopterin triphosphate biosynthesis; 7,8-dihydroneopterin triphosphate from GTP: step 1/1. Its function is as follows. Converts GTP to 7,8-dihydroneopterin triphosphate. The sequence is that of GTP cyclohydrolase FolE2 from Akkermansia muciniphila (strain ATCC BAA-835 / DSM 22959 / JCM 33894 / BCRC 81048 / CCUG 64013 / CIP 107961 / Muc).